Reading from the N-terminus, the 346-residue chain is Cyclin-dependent kinase 20 (346 aa).

In terms of domain architecture, Protein kinase spans 4-288 (YCILGRIGEG…ASQALLHQYF (285 aa)). Residues 10–18 (IGEGAHGIV) and Lys-33 each bind ATP. Catalysis depends on Asp-127, which acts as the Proton acceptor. The tract at residues 298–324 (SELPIPQRPGGPAPKAHPGPPHVHDFH) is disordered. The span at 303-318 (PQRPGGPAPKAHPGPP) shows a compositional bias: pro residues.

Belongs to the protein kinase superfamily. CMGC Ser/Thr protein kinase family. CDC2/CDKX subfamily. As to quaternary structure, monomer. Interacts with MAK. Interacts with TBC1D32.

It localises to the nucleus. The protein localises to the cytoplasm. The protein resides in the cell projection. Its subcellular location is the cilium. The enzyme catalyses L-seryl-[protein] + ATP = O-phospho-L-seryl-[protein] + ADP + H(+). It carries out the reaction L-threonyl-[protein] + ATP = O-phospho-L-threonyl-[protein] + ADP + H(+). In terms of biological role, involved in cell growth. Activates CDK2, a kinase involved in the control of the cell cycle, by phosphorylating residue 'Thr-160'. Required for high-level Shh responses in the developing neural tube. Together with TBC1D32, controls the structure of the primary cilium by coordinating assembly of the ciliary membrane and axoneme, allowing GLI2 to be properly activated in response to SHH signaling. The chain is Cyclin-dependent kinase 20 (Cdk20) from Mus musculus (Mouse).